The chain runs to 1000 residues: Probable coatomer subunit beta' (1000 aa).

7 WD repeats span residues 13-52 (ARSD…LVKS), 55-94 (VCDV…RVHQ), 97-136 (AHSD…AMKQ), 140-180 (GHTH…PNFT), 183-224 (GHEK…CVQT), 227-266 (GHAQ…LETT), and 351-391 (LGSS…NKDF). Residues 863 to 1000 (PRQTETQLKA…MDDLNLDEED (138 aa)) are disordered. Positions 901-915 (EPEEEEEQEEFDDDQ) are enriched in acidic residues. The span at 960 to 969 (SASSQQSAQD) shows a compositional bias: low complexity. The segment covering 970–1000 (FQDDTQWSDEDFGDAENGDLNMDDLNLDEED) has biased composition (acidic residues).

It belongs to the WD repeat COPB2 family. In terms of assembly, oligomeric complex that consists of at least the alpha, beta, beta', gamma, delta, epsilon and zeta subunits.

The protein localises to the cytoplasm. Its subcellular location is the golgi apparatus membrane. It is found in the cytoplasmic vesicle. The protein resides in the COPI-coated vesicle membrane. Its function is as follows. The coatomer is a cytosolic protein complex that binds to dilysine motifs and reversibly associates with Golgi non-clathrin-coated vesicles, which further mediate biosynthetic protein transport from the ER, via the Golgi up to the trans Golgi network. Coatomer complex is required for budding from Golgi membranes, and is essential for the retrograde Golgi-to-ER transport of dilysine-tagged proteins. The chain is Probable coatomer subunit beta' (copb-2) from Caenorhabditis elegans.